The following is a 214-amino-acid chain: Large ribosomal subunit protein uL3 (214 aa).

Residues 133 to 154 form a disordered region; that stretch reads GLGAGHGTQRKHRSPGSIGGCA.

Belongs to the universal ribosomal protein uL3 family. As to quaternary structure, part of the 50S ribosomal subunit. Forms a cluster with proteins L14 and L19.

Functionally, one of the primary rRNA binding proteins, it binds directly near the 3'-end of the 23S rRNA, where it nucleates assembly of the 50S subunit. The polypeptide is Large ribosomal subunit protein uL3 (Streptomyces avermitilis (strain ATCC 31267 / DSM 46492 / JCM 5070 / NBRC 14893 / NCIMB 12804 / NRRL 8165 / MA-4680)).